A 289-amino-acid polypeptide reads, in one-letter code: Protoheme IX farnesyltransferase (289 aa).

A run of 9 helical transmembrane segments spans residues 18-38, 40-60, 87-107, 111-131, 139-159, 168-188, 212-232, 234-254, and 269-289; these read VTSLVLATIIPGLYLASEQSP, GFLIAITLFGTFLMSSASFIF, VVQATLVGIAMMGSSFYVLAV, LLTALCAFAALISYVFLYTIF, NIVIGGVAGCVGPLIGYAAIG, SLFMMIFLWTPAHFWALAIFL, SIFFYTILYSIACVSFYFLES, MGFLYLIVSLIVCIWMGILSY, and FFFSILHLFIINITIVVDHLI.

It belongs to the UbiA prenyltransferase family. Protoheme IX farnesyltransferase subfamily.

The protein localises to the cell inner membrane. The catalysed reaction is heme b + (2E,6E)-farnesyl diphosphate + H2O = Fe(II)-heme o + diphosphate. It participates in porphyrin-containing compound metabolism; heme O biosynthesis; heme O from protoheme: step 1/1. In terms of biological role, converts heme B (protoheme IX) to heme O by substitution of the vinyl group on carbon 2 of heme B porphyrin ring with a hydroxyethyl farnesyl side group. The sequence is that of Protoheme IX farnesyltransferase from Leptospira interrogans serogroup Icterohaemorrhagiae serovar copenhageni (strain Fiocruz L1-130).